A 1451-amino-acid chain; its full sequence is ABC transporter G family member 32 (1451 aa).

Positions 162 to 435 (GNALHISPTR…FELMGFRCPQ (274 aa)) constitute an ABC transporter 1 domain. Position 195–202 (195–202 (GPPGSGKT)) interacts with ATP. The 213-residue stretch at 513–725 (ALLKANIDRE…AQNAISTNEF (213 aa)) folds into the ABC transmembrane type-2 1 domain. 6 consecutive transmembrane segments (helical) span residues 531 to 551 (FVYI…MTTF), 563 to 583 (GTIY…NGFA), 618 to 638 (IPVT…VVGF), 650 to 670 (LLLV…AGIG), 674 to 694 (VVSQ…GGFI), and 760 to 780 (IGFG…TVAL). Positions 809–835 (ILDSCEEKKSRKKEQSQSVNQKHWNNT) are disordered. The segment covering 813–823 (CEEKKSRKKEQ) has biased composition (basic and acidic residues). Residues 853-1105 (LSFNDIKYSV…KLIEYFEGIE (253 aa)) form the ABC transporter 2 domain. 898–905 (GVSGAGKT) is an ATP binding site. An ABC transmembrane type-2 2 domain is found at 1178–1392 (TQCIACLWKH…TLYGLVASQF (215 aa)). 7 consecutive transmembrane segments (helical) span residues 1197–1217 (YTAV…TMFW), 1237–1257 (YAAV…VVVV), 1285–1305 (LPYI…MIGF), 1312–1332 (FIWY…FGMM), 1342–1362 (IAAI…GYLI), 1373–1393 (WYCW…SQFG), and 1423–1443 (LVAV…SFAI).

It belongs to the ABC transporter superfamily. ABCG family. PDR (TC 3.A.1.205) subfamily.

It is found in the membrane. In terms of biological role, may be a general defense protein. The polypeptide is ABC transporter G family member 32 (Oryza sativa subsp. japonica (Rice)).